Reading from the N-terminus, the 206-residue chain is Small ribosomal subunit protein uS4 (206 aa).

Residues 96–157 (SRLDNVVYRM…KAKNQARIQN (62 aa)) form the S4 RNA-binding domain.

This sequence belongs to the universal ribosomal protein uS4 family. In terms of assembly, part of the 30S ribosomal subunit. Contacts protein S5. The interaction surface between S4 and S5 is involved in control of translational fidelity.

One of the primary rRNA binding proteins, it binds directly to 16S rRNA where it nucleates assembly of the body of the 30S subunit. Functionally, with S5 and S12 plays an important role in translational accuracy. The sequence is that of Small ribosomal subunit protein uS4 from Chromohalobacter salexigens (strain ATCC BAA-138 / DSM 3043 / CIP 106854 / NCIMB 13768 / 1H11).